Reading from the N-terminus, the 200-residue chain is dTTP/UTP pyrophosphatase (200 aa).

Asp76 functions as the Proton acceptor in the catalytic mechanism.

Belongs to the Maf family. YhdE subfamily. A divalent metal cation is required as a cofactor.

It localises to the cytoplasm. The catalysed reaction is dTTP + H2O = dTMP + diphosphate + H(+). The enzyme catalyses UTP + H2O = UMP + diphosphate + H(+). In terms of biological role, nucleoside triphosphate pyrophosphatase that hydrolyzes dTTP and UTP. May have a dual role in cell division arrest and in preventing the incorporation of modified nucleotides into cellular nucleic acids. The chain is dTTP/UTP pyrophosphatase from Acetivibrio thermocellus (strain ATCC 27405 / DSM 1237 / JCM 9322 / NBRC 103400 / NCIMB 10682 / NRRL B-4536 / VPI 7372) (Clostridium thermocellum).